Consider the following 171-residue polypeptide: Homeobox protein engrailed-1-B (171 aa).

Disordered regions lie at residues 1–41 (EDPG…NAAP) and 60–86 (YSDR…KRPR). Over residues 15–29 (PDSDTPSDSSKGSDS) the composition is skewed to low complexity. Positions 82-141 (DKRPRTAFTAEQLQRLKAEFQANRYITEQRRQTLAQELSLNESQIKIWFQNKRAKIKKAS) form a DNA-binding region, homeobox.

This sequence belongs to the engrailed homeobox family.

It localises to the nucleus. Its function is as follows. Required for proper formation of the apical ectodermal ridge and correct dorsal-ventral patterning in the limb. The chain is Homeobox protein engrailed-1-B (en1-b) from Xenopus laevis (African clawed frog).